The chain runs to 909 residues: Nitrate reductase [NADH] (909 aa).

Cys-187 is a Mo-molybdopterin binding site. The region spanning 535–610 (SKMYSMSEVK…LEDFRIGELI (76 aa)) is the Cytochrome b5 heme-binding domain. Residues His-570 and His-593 each coordinate heme. The region spanning 652–764 (REKIPCKLVD…KGPLGHIEYQ (113 aa)) is the FAD-binding FR-type domain. Residues 704 to 707 (RAYT), 721 to 725 (VVKIY), Phe-726, Phe-733, 738 to 740 (QMS), and Thr-791 each bind FAD.

This sequence belongs to the nitrate reductase family. In terms of assembly, homodimer. FAD serves as cofactor. It depends on heme as a cofactor. Mo-molybdopterin is required as a cofactor.

It carries out the reaction nitrite + NAD(+) + H2O = nitrate + NADH + H(+). With respect to regulation, regulated by the nitrogen source and controlled by the circadian rhythm. Functionally, nitrate reductase is a key enzyme involved in the first step of nitrate assimilation in plants, fungi and bacteria. The chain is Nitrate reductase [NADH] (NIA) from Petunia hybrida (Petunia).